A 148-amino-acid polypeptide reads, in one-letter code: Large ribosomal subunit protein bL9 (148 aa).

It belongs to the bacterial ribosomal protein bL9 family.

Binds to the 23S rRNA. The chain is Large ribosomal subunit protein bL9 from Ruminiclostridium cellulolyticum (strain ATCC 35319 / DSM 5812 / JCM 6584 / H10) (Clostridium cellulolyticum).